We begin with the raw amino-acid sequence, 638 residues long: 1-deoxy-D-xylulose-5-phosphate synthase (638 aa).

Residues H71 and 112 to 114 contribute to the thiamine diphosphate site; that span reads SHA. Residue D144 coordinates Mg(2+). Thiamine diphosphate contacts are provided by residues 145 to 146, N173, Y284, and E365; that span reads GA. Mg(2+) is bound at residue N173.

Belongs to the transketolase family. DXPS subfamily. As to quaternary structure, homodimer. It depends on Mg(2+) as a cofactor. Requires thiamine diphosphate as cofactor.

It carries out the reaction D-glyceraldehyde 3-phosphate + pyruvate + H(+) = 1-deoxy-D-xylulose 5-phosphate + CO2. Its pathway is metabolic intermediate biosynthesis; 1-deoxy-D-xylulose 5-phosphate biosynthesis; 1-deoxy-D-xylulose 5-phosphate from D-glyceraldehyde 3-phosphate and pyruvate: step 1/1. Catalyzes the acyloin condensation reaction between C atoms 2 and 3 of pyruvate and glyceraldehyde 3-phosphate to yield 1-deoxy-D-xylulose-5-phosphate (DXP). The polypeptide is 1-deoxy-D-xylulose-5-phosphate synthase (Mycobacterium bovis (strain ATCC BAA-935 / AF2122/97)).